A 279-amino-acid chain; its full sequence is 4-diphosphocytidyl-2-C-methyl-D-erythritol kinase (279 aa).

K11 is an active-site residue. 95–105 (PVAAGLGGGSS) is a binding site for ATP. D137 is an active-site residue.

It belongs to the GHMP kinase family. IspE subfamily.

The enzyme catalyses 4-CDP-2-C-methyl-D-erythritol + ATP = 4-CDP-2-C-methyl-D-erythritol 2-phosphate + ADP + H(+). Its pathway is isoprenoid biosynthesis; isopentenyl diphosphate biosynthesis via DXP pathway; isopentenyl diphosphate from 1-deoxy-D-xylulose 5-phosphate: step 3/6. Its function is as follows. Catalyzes the phosphorylation of the position 2 hydroxy group of 4-diphosphocytidyl-2C-methyl-D-erythritol. This chain is 4-diphosphocytidyl-2-C-methyl-D-erythritol kinase, found in Geotalea daltonii (strain DSM 22248 / JCM 15807 / FRC-32) (Geobacter daltonii).